Reading from the N-terminus, the 590-residue chain is Suprabasin (590 aa).

Positions 1–25 (MHLARLVGSCSLLLLLGALSGWAAS) are cleaved as a signal peptide. 4 disordered regions span residues 182–213 (GNEA…AHHG), 242–266 (FGQG…GVHH), 297–338 (GQGA…GVHH), and 545–570 (LNGN…SGAS). Composition is skewed to low complexity over residues 190-200 (QGVHHAAGQAG), 243-254 (GQGAHHAAGQAG), 297-330 (GQGA…NEAG), and 546-559 (NGNH…HQGG). Residues 560–570 (ATTTPLASGAS) are compositionally biased toward polar residues.

Detected in thymus, uterus and esophagus.

It localises to the secreted. This chain is Suprabasin (SBSN), found in Homo sapiens (Human).